The sequence spans 417 residues: MLKREMNIADYDAELWQAMEQEKVRQEEHIELIASENYTSPRVMQAQGSQLTNKYAEGYPGKRYYGGCEYVDVVEQLAIDRAKELFGADYANVQPHSGSQANFAVYTALLQPGDTVLGMNLAQGGHLTHGSPVNFSGKLYNIIPYGIDESGKIDYDDMAKQAQEHKPKMIIGGFSAYSGIVDWAKMREIADSIGAYLFVDMAHVAGLIAAGVYPNPVPHAHVVTTTTHKTLAGPRGGLILAKGGSEELYKKLNSAVFPSAQGGPLMHVIAAKAVALKEAMEPEFKVYQQQVAKNAKAMVEVFLNRGYKVVSGGTENHLFLLDLVDKNLTGKEADAALGRANITVNKNSVPNDPKSPFVTSGIRIGSPAVTRRGFKEAEVKELAGWMCDVLDNINDEAVIERVKGKVLDICARFPVYA.

(6S)-5,6,7,8-tetrahydrofolate-binding positions include leucine 121 and 125-127 (GHL). Lysine 229 carries the N6-(pyridoxal phosphate)lysine modification. 355–357 (SPF) provides a ligand contact to (6S)-5,6,7,8-tetrahydrofolate.

Belongs to the SHMT family. As to quaternary structure, homodimer. Pyridoxal 5'-phosphate serves as cofactor.

The protein localises to the cytoplasm. The enzyme catalyses (6R)-5,10-methylene-5,6,7,8-tetrahydrofolate + glycine + H2O = (6S)-5,6,7,8-tetrahydrofolate + L-serine. It participates in one-carbon metabolism; tetrahydrofolate interconversion. The protein operates within amino-acid biosynthesis; glycine biosynthesis; glycine from L-serine: step 1/1. Catalyzes the reversible interconversion of serine and glycine with tetrahydrofolate (THF) serving as the one-carbon carrier. This reaction serves as the major source of one-carbon groups required for the biosynthesis of purines, thymidylate, methionine, and other important biomolecules. Also exhibits THF-independent aldolase activity toward beta-hydroxyamino acids, producing glycine and aldehydes, via a retro-aldol mechanism. This Klebsiella pneumoniae (strain 342) protein is Serine hydroxymethyltransferase.